A 43-amino-acid chain; its full sequence is Neurotrophic factor BDNF (43 aa).

It belongs to the NGF-beta family.

Its subcellular location is the secreted. Functionally, promotes the survival of neuronal populations that are all located either in the central nervous system or directly connected to it. The polypeptide is Neurotrophic factor BDNF (BDNF) (Macrovipera lebetinus (Levantine viper)).